The following is a 315-amino-acid chain: Prephenate dehydratase (315 aa).

The 184-residue stretch at 7 to 190 (VVAYLGPAGT…ARTRFVAVQA (184 aa)) folds into the Prephenate dehydratase domain. Positions 204–283 (SVIFSLPNVP…LVFVGSWPSN (80 aa)) constitute an ACT domain.

The enzyme catalyses prephenate + H(+) = 3-phenylpyruvate + CO2 + H2O. Its pathway is amino-acid biosynthesis; L-phenylalanine biosynthesis; phenylpyruvate from prephenate: step 1/1. The sequence is that of Prephenate dehydratase (pheA) from Corynebacterium glutamicum (strain ATCC 13032 / DSM 20300 / JCM 1318 / BCRC 11384 / CCUG 27702 / LMG 3730 / NBRC 12168 / NCIMB 10025 / NRRL B-2784 / 534).